We begin with the raw amino-acid sequence, 145 residues long: Large ribosomal subunit protein bL19 (145 aa).

Over residues 112–130 (GKSARIKERRPAKAVEKTS) the composition is skewed to basic and acidic residues. Positions 112–145 (GKSARIKERRPAKAVEKTSKPASAKKPAAKANKK) are disordered.

Belongs to the bacterial ribosomal protein bL19 family.

Its function is as follows. This protein is located at the 30S-50S ribosomal subunit interface and may play a role in the structure and function of the aminoacyl-tRNA binding site. This Malacoplasma penetrans (strain HF-2) (Mycoplasma penetrans) protein is Large ribosomal subunit protein bL19.